Here is a 326-residue protein sequence, read N- to C-terminus: Acetyl-coenzyme A carboxylase carboxyl transferase subunit alpha (326 aa).

Positions 44 to 298 (KLETRAMQLR…KQALLDNLDE (255 aa)) constitute a CoA carboxyltransferase C-terminal domain.

It belongs to the AccA family. As to quaternary structure, acetyl-CoA carboxylase is a heterohexamer composed of biotin carboxyl carrier protein (AccB), biotin carboxylase (AccC) and two subunits each of ACCase subunit alpha (AccA) and ACCase subunit beta (AccD).

It localises to the cytoplasm. It carries out the reaction N(6)-carboxybiotinyl-L-lysyl-[protein] + acetyl-CoA = N(6)-biotinyl-L-lysyl-[protein] + malonyl-CoA. It functions in the pathway lipid metabolism; malonyl-CoA biosynthesis; malonyl-CoA from acetyl-CoA: step 1/1. Functionally, component of the acetyl coenzyme A carboxylase (ACC) complex. First, biotin carboxylase catalyzes the carboxylation of biotin on its carrier protein (BCCP) and then the CO(2) group is transferred by the carboxyltransferase to acetyl-CoA to form malonyl-CoA. In Nostoc sp. (strain PCC 7120 / SAG 25.82 / UTEX 2576), this protein is Acetyl-coenzyme A carboxylase carboxyl transferase subunit alpha.